The primary structure comprises 1131 residues: Filamin A-interacting protein 1-like (1131 aa).

The segment at 1–62 is disordered; sequence MRSRSSNAEG…KSHTGKGHHT (62 aa). Over residues 50-62 the composition is skewed to basic and acidic residues; it reads VSEKSHTGKGHHT. 2 coiled-coil regions span residues 139–583 and 610–780; these read NELD…LSKV and SKST…KSLR. Position 789 is a phosphoserine (Ser-789). A phosphothreonine mark is found at Thr-984 and Thr-992. At Ser-1050 the chain carries Phosphoserine.

It belongs to the FILIP1 family.

The protein resides in the cytoplasm. It localises to the membrane. It is found in the nucleus. Acts as a regulator of the antiangiogenic activity on endothelial cells. When overexpressed in endothelial cells, leads to inhibition of cell proliferation and migration and an increase in apoptosis. Inhibits melanoma growth When expressed in tumor-associated vasculature. This is Filamin A-interacting protein 1-like (Filip1l) from Mus musculus (Mouse).